Consider the following 277-residue polypeptide: Formamidopyrimidine-DNA glycosylase (277 aa).

The Schiff-base intermediate with DNA role is filled by Pro-2. The Proton donor role is filled by Glu-3. The Proton donor; for beta-elimination activity role is filled by Lys-59. DNA-binding residues include His-96, Arg-115, and Arg-158. An FPG-type zinc finger spans residues 243-277 (WVYGRGGNPCRRCGGEILREKRAGRSTHFCPRCQK). Arg-267 (proton donor; for delta-elimination activity) is an active-site residue.

This sequence belongs to the FPG family. As to quaternary structure, monomer. Zn(2+) is required as a cofactor.

The catalysed reaction is Hydrolysis of DNA containing ring-opened 7-methylguanine residues, releasing 2,6-diamino-4-hydroxy-5-(N-methyl)formamidopyrimidine.. It catalyses the reaction 2'-deoxyribonucleotide-(2'-deoxyribose 5'-phosphate)-2'-deoxyribonucleotide-DNA = a 3'-end 2'-deoxyribonucleotide-(2,3-dehydro-2,3-deoxyribose 5'-phosphate)-DNA + a 5'-end 5'-phospho-2'-deoxyribonucleoside-DNA + H(+). Functionally, involved in base excision repair of DNA damaged by oxidation or by mutagenic agents. Acts as a DNA glycosylase that recognizes and removes damaged bases. Has a preference for oxidized purines, such as 7,8-dihydro-8-oxoguanine (8-oxoG). Has AP (apurinic/apyrimidinic) lyase activity and introduces nicks in the DNA strand. Cleaves the DNA backbone by beta-delta elimination to generate a single-strand break at the site of the removed base with both 3'- and 5'-phosphates. In Heliobacterium modesticaldum (strain ATCC 51547 / Ice1), this protein is Formamidopyrimidine-DNA glycosylase.